We begin with the raw amino-acid sequence, 664 residues long: Glycine--tRNA ligase beta subunit (664 aa).

The protein belongs to the class-II aminoacyl-tRNA synthetase family. In terms of assembly, tetramer of two alpha and two beta subunits.

It is found in the cytoplasm. It catalyses the reaction tRNA(Gly) + glycine + ATP = glycyl-tRNA(Gly) + AMP + diphosphate. In Rickettsia peacockii (strain Rustic), this protein is Glycine--tRNA ligase beta subunit.